Consider the following 164-residue polypeptide: MADQARARRLAKRICTIVASAIEFEIKDPGLDGVTIVDVKVTADLHDATVFYTVMGRTLEDAPDYTAATAALNRAKGTLRSKVGAGTGVRFTPTLTFIRDTTSDSVARMEELLARARAADADVAQVRLRAKPAGEADPYRDKGSVAGLVGVDIADIDDDDLTDD.

This sequence belongs to the RbfA family. As to quaternary structure, monomer. Binds 30S ribosomal subunits, but not 50S ribosomal subunits or 70S ribosomes.

The protein resides in the cytoplasm. Functionally, one of several proteins that assist in the late maturation steps of the functional core of the 30S ribosomal subunit. Associates with free 30S ribosomal subunits (but not with 30S subunits that are part of 70S ribosomes or polysomes). Required for efficient processing of 16S rRNA. May interact with the 5'-terminal helix region of 16S rRNA. The chain is Ribosome-binding factor A from Mycobacterium leprae (strain Br4923).